We begin with the raw amino-acid sequence, 1149 residues long: Nitric oxide synthase, inducible (1149 aa).

The disordered stretch occupies residues 22 to 83 (KDINNNVGKA…HKPSPTCSQH (62 aa)). Residues 23-27 (DINNN) carry the DINNN-motif; mediates interaction with SPSB1, SPSB2 and SPSB4 motif. Polar residues predominate over residues 50–61 (KHQNGSSQSLTG). Zn(2+) is bound by residues cysteine 109 and cysteine 114. Serine 117 provides a ligand contact to (6R)-L-erythro-5,6,7,8-tetrahydrobiopterin. Cysteine 199 contacts heme b. Positions 262, 371, 372, and 376 each coordinate L-arginine. (6R)-L-erythro-5,6,7,8-tetrahydrobiopterin contacts are provided by arginine 380, isoleucine 461, tryptophan 462, and phenylalanine 475. Tyrosine 490 provides a ligand contact to heme b. A calmodulin-binding region spans residues 514-534 (FRVLAKATLFASLLMRKMMAS). Residues 538 to 676 (ATILFATETG…AFCTWAVQTF (139 aa)) enclose the Flavodoxin-like domain. FMN is bound by residues threonine 544, glutamate 545, threonine 546, lysine 548, and serine 549. Residue tyrosine 574 is modified to Phosphotyrosine. Residues serine 590, threonine 591, serine 627, arginine 632, cysteine 634, glutamate 660, and glutamine 664 each contribute to the FMN site. Residues 729 to 969 (TDVFTMRLKS…VRSVNSFQLP (241 aa)) enclose the FAD-binding FR-type domain. Arginine 749 provides a ligand contact to NADP(+). 6 residues coordinate FAD: histidine 771, arginine 905, tyrosine 907, serine 908, threonine 923, and alanine 925. Threonine 928 is an NADP(+) binding site. Tyrosine 929, valine 942, cysteine 943, and serine 944 together coordinate FAD. Residues threonine 983, arginine 1016, serine 1045, arginine 1046, lysine 1052, tyrosine 1054, glutamine 1056, and aspartate 1089 each coordinate NADP(+).

This sequence belongs to the NOS family. Homodimer. Interacts with NHERF1. Interacts with GAPDH; induced by oxidatively-modified low-densitity lipoprotein (LDL(ox)). Interacts with S100A8 and S100A9 to form the iNOS-S100A8/9 transnitrosylase complex. Interacts with SPSB1, SPSB2 and SPSB4. Interacts with ELOC and CUL5 in the presence of SPSB1 or SPSB2 or SPSB4. Forms a complex with ASL, ASS1 and HSP90AA1; the complex regulates cell-autonomous L-arginine synthesis and citrulline recycling while channeling extracellular L-arginine to nitric oxide synthesis pathway. It depends on heme b as a cofactor. Requires FAD as cofactor. FMN is required as a cofactor. (6R)-L-erythro-5,6,7,8-tetrahydrobiopterin serves as cofactor. In terms of processing, polyubiquitinated; mediated by SPSB1, SPSB2 and SPSB4, leading to proteasomal degradation. Expressed in the lung and colon. Not detected in the heart, aorta, liver, kidney, and spleen.

The protein localises to the cytoplasm. It localises to the cytosol. It carries out the reaction 2 L-arginine + 3 NADPH + 4 O2 + H(+) = 2 L-citrulline + 2 nitric oxide + 3 NADP(+) + 4 H2O. Its activity is regulated as follows. Regulated by calcium/calmodulin. Its function is as follows. Produces nitric oxide (NO) which is a messenger molecule with diverse functions throughout the body. In macrophages, NO mediates tumoricidal and bactericidal actions. Also has nitrosylase activity and mediates cysteine S-nitrosylation of cytoplasmic target proteins such PTGS2/COX2. As component of the iNOS-S100A8/9 transnitrosylase complex involved in the selective inflammatory stimulus-dependent S-nitrosylation of GAPDH implicated in regulation of the GAIT complex activity and probably multiple targets including ANXA5, EZR, MSN and VIM. Involved in inflammation, enhances the synthesis of pro-inflammatory mediators such as IL6 and IL8. The sequence is that of Nitric oxide synthase, inducible (NOS2) from Cavia porcellus (Guinea pig).